A 551-amino-acid chain; its full sequence is Membrane protein insertase YidC (551 aa).

Residues 3-23 form a helical membrane-spanning segment; the sequence is ANHIRILLLVTIAIMFISLMG. The span at 33–47 shows a compositional bias: polar residues; it reads NTKQQTSATQNNSHY. The segment at 33–58 is disordered; sequence NTKQQTSATQNNSHYDNADSSTNTDV. The next 3 membrane-spanning stretches (helical) occupy residues 361–381, 431–451, and 504–524; these read LVGNWGLAIILVTCLIKLIFY, LSGCLPMLIQIPIFISLYWVL, and VMMFLPVIFTFLFASFPSGLV.

It belongs to the OXA1/ALB3/YidC family. Type 1 subfamily. In terms of assembly, interacts with the Sec translocase complex via SecD. Specifically interacts with transmembrane segments of nascent integral membrane proteins during membrane integration.

The protein resides in the cell inner membrane. Required for the insertion and/or proper folding and/or complex formation of integral membrane proteins into the membrane. Involved in integration of membrane proteins that insert both dependently and independently of the Sec translocase complex, as well as at least some lipoproteins. Aids folding of multispanning membrane proteins. The protein is Membrane protein insertase YidC of Francisella tularensis subsp. novicida (strain U112).